Reading from the N-terminus, the 143-residue chain is Large ribosomal subunit protein uL11 (143 aa).

It belongs to the universal ribosomal protein uL11 family. In terms of assembly, part of the ribosomal stalk of the 50S ribosomal subunit. Interacts with L10 and the large rRNA to form the base of the stalk. L10 forms an elongated spine to which L12 dimers bind in a sequential fashion forming a multimeric L10(L12)X complex. In terms of processing, one or more lysine residues are methylated.

Forms part of the ribosomal stalk which helps the ribosome interact with GTP-bound translation factors. This is Large ribosomal subunit protein uL11 from Cutibacterium acnes (strain DSM 16379 / KPA171202) (Propionibacterium acnes).